A 141-amino-acid polypeptide reads, in one-letter code: 15 kDa lipoprotein (141 aa).

The signal sequence occupies residues 1-17 (MVKRGRFALCLAVLLGA). The N-palmitoyl cysteine moiety is linked to residue Cys18. Cys18 carries the S-diacylglycerol cysteine lipid modification.

The protein resides in the cell membrane. This is 15 kDa lipoprotein (tpp15) from Treponema pallidum (strain Nichols).